Reading from the N-terminus, the 637-residue chain is Phosphomethylpyrimidine synthase (637 aa).

Substrate-binding positions include asparagine 242, methionine 271, tyrosine 300, histidine 336, 356–358, 397–400, and glutamate 436; these read SRG and DGLR. A Zn(2+)-binding site is contributed by histidine 440. Tyrosine 463 provides a ligand contact to substrate. Histidine 504 is a binding site for Zn(2+). [4Fe-4S] cluster contacts are provided by cysteine 584, cysteine 587, and cysteine 592.

Belongs to the ThiC family. As to quaternary structure, homodimer. [4Fe-4S] cluster serves as cofactor.

It carries out the reaction 5-amino-1-(5-phospho-beta-D-ribosyl)imidazole + S-adenosyl-L-methionine = 4-amino-2-methyl-5-(phosphooxymethyl)pyrimidine + CO + 5'-deoxyadenosine + formate + L-methionine + 3 H(+). The protein operates within cofactor biosynthesis; thiamine diphosphate biosynthesis. Functionally, catalyzes the synthesis of the hydroxymethylpyrimidine phosphate (HMP-P) moiety of thiamine from aminoimidazole ribotide (AIR) in a radical S-adenosyl-L-methionine (SAM)-dependent reaction. This chain is Phosphomethylpyrimidine synthase, found in Bordetella avium (strain 197N).